Consider the following 331-residue polypeptide: Centriolar satellite-associated tubulin polyglutamylase complex regulator 1 (331 aa).

The interval 1–111 (MLSPERLALP…HCLLQLLCPD (111 aa)) is required for interaction with PCM1. The interval 1-225 (MLSPERLALP…SCPPPALVKE (225 aa)) is required for interaction with TPGS1, LRRC49, and TTLL1. Residues 112–331 (FPLELTQKAA…STEETDESET (220 aa)) are required for interaction with TPGS2. Residues 288-331 (SPEASCLPSRTPPRVGSPWRPLHHSRKVDGESDGSTEETDESET) form a disordered region. Residues 318–331 (ESDGSTEETDESET) are compositionally biased toward acidic residues. S319 is modified (phosphoserine).

The protein belongs to the CSTPP1 family. In terms of assembly, interacts with PCM1. Interacts with TTLL1, TPGS1, TPGS2 and LRRC49; the interactions link CSTPP1 to the complex TPGC. Binds to alpha-tubulin.

The protein resides in the cytoplasm. The protein localises to the cytoskeleton. It is found in the microtubule organizing center. Its subcellular location is the centrosome. It localises to the centriolar satellite. In terms of biological role, regulator of the tubulin polyglutamylase complex (TPGC) that controls cytoskeletal organization, nuclear shape, and cilium disassembly by balancing microtubule and actin assembly. Regulates the assembly and stability of the TPGC and thereby modulates polyglutamylation of the microtubule, which antagonizes MAP4 binding. The chain is Centriolar satellite-associated tubulin polyglutamylase complex regulator 1 from Homo sapiens (Human).